Consider the following 164-residue polypeptide: NAD(P)H-quinone oxidoreductase subunit I, chloroplastic (164 aa).

2 4Fe-4S ferredoxin-type domains span residues 55–84 (GRIH…VDWK) and 95–124 (LNYS…MTEE). Cys64, Cys67, Cys70, Cys74, Cys104, Cys107, Cys110, and Cys114 together coordinate [4Fe-4S] cluster.

Belongs to the complex I 23 kDa subunit family. NDH is composed of at least 16 different subunits, 5 of which are encoded in the nucleus. [4Fe-4S] cluster serves as cofactor.

It localises to the plastid. It is found in the chloroplast thylakoid membrane. It carries out the reaction a plastoquinone + NADH + (n+1) H(+)(in) = a plastoquinol + NAD(+) + n H(+)(out). The catalysed reaction is a plastoquinone + NADPH + (n+1) H(+)(in) = a plastoquinol + NADP(+) + n H(+)(out). In terms of biological role, NDH shuttles electrons from NAD(P)H:plastoquinone, via FMN and iron-sulfur (Fe-S) centers, to quinones in the photosynthetic chain and possibly in a chloroplast respiratory chain. The immediate electron acceptor for the enzyme in this species is believed to be plastoquinone. Couples the redox reaction to proton translocation, and thus conserves the redox energy in a proton gradient. This chain is NAD(P)H-quinone oxidoreductase subunit I, chloroplastic, found in Daucus carota (Wild carrot).